The following is a 445-amino-acid chain: Probable glycine dehydrogenase (decarboxylating) subunit 1 (445 aa).

Belongs to the GcvP family. N-terminal subunit subfamily. As to quaternary structure, the glycine cleavage system is composed of four proteins: P, T, L and H. In this organism, the P 'protein' is a heterodimer of two subunits.

The catalysed reaction is N(6)-[(R)-lipoyl]-L-lysyl-[glycine-cleavage complex H protein] + glycine + H(+) = N(6)-[(R)-S(8)-aminomethyldihydrolipoyl]-L-lysyl-[glycine-cleavage complex H protein] + CO2. Its function is as follows. The glycine cleavage system catalyzes the degradation of glycine. The P protein binds the alpha-amino group of glycine through its pyridoxal phosphate cofactor; CO(2) is released and the remaining methylamine moiety is then transferred to the lipoamide cofactor of the H protein. The chain is Probable glycine dehydrogenase (decarboxylating) subunit 1 from Anaeromyxobacter dehalogenans (strain 2CP-C).